We begin with the raw amino-acid sequence, 98 residues long: NADH-ubiquinone oxidoreductase chain 4L (98 aa).

3 helical membrane passes run 1–21, 36–56, and 61–81; these read MVLIKLNIIVAFMLALSGVLI, MMLSLFIFMAAMITHFHMFSI, and LILLVFSACEAGVGLALLVSI.

Belongs to the complex I subunit 4L family.

The protein resides in the mitochondrion membrane. It carries out the reaction a ubiquinone + NADH + 5 H(+)(in) = a ubiquinol + NAD(+) + 4 H(+)(out). Functionally, core subunit of the mitochondrial membrane respiratory chain NADH dehydrogenase (Complex I) which catalyzes electron transfer from NADH through the respiratory chain, using ubiquinone as an electron acceptor. Part of the enzyme membrane arm which is embedded in the lipid bilayer and involved in proton translocation. The polypeptide is NADH-ubiquinone oxidoreductase chain 4L (MT-ND4L) (Didelphis virginiana (North American opossum)).